Reading from the N-terminus, the 158-residue chain is 6,7-dimethyl-8-ribityllumazine synthase (158 aa).

Residues Phe23, Ser61 to Glu63, and Ala85 to Ile87 contribute to the 5-amino-6-(D-ribitylamino)uracil site. Residue Glu90–Thr91 coordinates (2S)-2-hydroxy-3-oxobutyl phosphate. His93 acts as the Proton donor in catalysis. Residue Phe118 participates in 5-amino-6-(D-ribitylamino)uracil binding. Arg132 is a (2S)-2-hydroxy-3-oxobutyl phosphate binding site.

This sequence belongs to the DMRL synthase family.

It catalyses the reaction (2S)-2-hydroxy-3-oxobutyl phosphate + 5-amino-6-(D-ribitylamino)uracil = 6,7-dimethyl-8-(1-D-ribityl)lumazine + phosphate + 2 H2O + H(+). The protein operates within cofactor biosynthesis; riboflavin biosynthesis; riboflavin from 2-hydroxy-3-oxobutyl phosphate and 5-amino-6-(D-ribitylamino)uracil: step 1/2. Its function is as follows. Catalyzes the formation of 6,7-dimethyl-8-ribityllumazine by condensation of 5-amino-6-(D-ribitylamino)uracil with 3,4-dihydroxy-2-butanone 4-phosphate. This is the penultimate step in the biosynthesis of riboflavin. In Prochlorococcus marinus (strain MIT 9312), this protein is 6,7-dimethyl-8-ribityllumazine synthase.